The sequence spans 132 residues: SH2 domain-containing protein 1B (132 aa).

Residues 5 to 101 (YYHGRLTKQD…GMVVHLLKPI (97 aa)) form the SH2 domain. At Tyr127 the chain carries Phosphotyrosine.

Binds to the phosphorylated receptors CD84, SLAMF1, LY9 and CD244. Does not bind to non-phosphorylated SLAMF1. Interacts with SLAMF7 (via ITSM phosphorylated on 'Tyr-304'). Interacts with Src kinases HCK, LYN, FYN, FGR and LCK (via kinase domains). Interacts (phosphorylated at Tyr-127) with PLCG1.

In terms of biological role, cytoplasmic adapter regulating receptors of the signaling lymphocytic activation molecule (SLAM) family such as CD84, SLAMF1, LY9 and CD244. In SLAM signaling seems to cooperate with SH2D1A/SAP. Plays a role in regulation of effector functions of natural killer (NK) cells by controlling signal transduction through CD244/2B4 without effecting its tyrosine phosphorylation; downstream signaling involves PLCG1 and ERK activation. Activation of SLAMF7-mediated NK cell function does not effect receptor tyrosine phosphorylation but distal signaling. In the context of NK cell-mediated cytotoxicity does not enhance conjugate formation with target cells but stimulates polarization of the microtubule-organizing center and cytotoxic granules toward the NK cell synapse. Negatively regulates CD40-induced cytokine production in dendritic cells downstream of SLAM family receptors probably by inducing activation of the PI3K pathway to inhibit p38 MAPK and JNK activation. This Homo sapiens (Human) protein is SH2 domain-containing protein 1B (SH2D1B).